The following is a 396-amino-acid chain: Elongation factor Tu (396 aa).

The 197-residue stretch at 10 to 206 (KPHVNVGTIG…ALDTYIPTPE (197 aa)) folds into the tr-type G domain. Residues 19-26 (GHVDHGKT) form a G1 region. Residue 19–26 (GHVDHGKT) participates in GTP binding. T26 contacts Mg(2+). Residues 60–64 (GITIN) are G2. Residues 81–84 (DCPG) form a G3 region. Residues 81–85 (DCPGH) and 136–139 (NKCD) each bind GTP. Residues 136-139 (NKCD) form a G4 region. The interval 174-176 (SAK) is G5.

It belongs to the TRAFAC class translation factor GTPase superfamily. Classic translation factor GTPase family. EF-Tu/EF-1A subfamily. As to quaternary structure, monomer.

The protein localises to the cytoplasm. It catalyses the reaction GTP + H2O = GDP + phosphate + H(+). In terms of biological role, GTP hydrolase that promotes the GTP-dependent binding of aminoacyl-tRNA to the A-site of ribosomes during protein biosynthesis. This Cupriavidus pinatubonensis (strain JMP 134 / LMG 1197) (Cupriavidus necator (strain JMP 134)) protein is Elongation factor Tu.